The chain runs to 84 residues: Small ribosomal subunit protein bS16 (84 aa).

This sequence belongs to the bacterial ribosomal protein bS16 family.

The chain is Small ribosomal subunit protein bS16 from Acaryochloris marina (strain MBIC 11017).